A 55-amino-acid polypeptide reads, in one-letter code: Photosystem I reaction center subunit IX (55 aa).

Residues 7–27 (YLSVAPVLSTLWFGSLAGLLI) form a helical membrane-spanning segment.

The protein belongs to the PsaJ family.

It localises to the plastid. Its subcellular location is the chloroplast thylakoid membrane. Functionally, may help in the organization of the PsaE and PsaF subunits. This Gossypium barbadense (Sea Island cotton) protein is Photosystem I reaction center subunit IX.